Reading from the N-terminus, the 906-residue chain is Coatomer subunit beta' (906 aa).

WD repeat units lie at residues 13–52 (ARSD…LVKT), 55–94 (VCDL…RVHM), 97–136 (AHSD…SCSQ), 140–180 (GHTH…PNFT), 183–224 (GHEK…CVQT), 227–266 (GHAQ…LEST), 350–388 (SCEI…NKSF), and 390–425 (SAQE…KSFK). Residue lysine 627 is modified to N6-acetyllysine. The stretch at 746 to 783 (IRTGRLPEAAFLARTYLPSQVSRVVKLWRENLSKVNQK) is one WD 9 repeat. Residues 837–863 (EEAKGFQPSRSTAQQELDGKPASPTPV) form a disordered region. Serine 859 is subject to Phosphoserine. Threonine 861 carries the phosphothreonine modification. Positions 866–890 (ASHTANKEEKSLLELEVDLDNLELV) form a coiled coil.

This sequence belongs to the WD repeat COPB2 family. In terms of assembly, oligomeric complex that consists of at least the alpha, beta, beta', gamma, delta, epsilon and zeta subunits. Probably interacts with PEX11A. Interacts with SCYL1. Interacts with JAGN1.

The protein resides in the cytoplasm. Its subcellular location is the cytosol. The protein localises to the golgi apparatus membrane. It is found in the cytoplasmic vesicle. It localises to the COPI-coated vesicle membrane. Functionally, the coatomer is a cytosolic protein complex that binds to dilysine motifs and reversibly associates with Golgi non-clathrin-coated vesicles, which further mediate biosynthetic protein transport from the ER, via the Golgi up to the trans Golgi network. Coatomer complex is required for budding from Golgi membranes, and is essential for the retrograde Golgi-to-ER transport of dilysine-tagged proteins. In mammals, the coatomer can only be recruited by membranes associated to ADP-ribosylation factors (ARFs), which are small GTP-binding proteins; the complex also influences the Golgi structural integrity, as well as the processing, activity, and endocytic recycling of LDL receptors. In terms of biological role, this coatomer complex protein, essential for Golgi budding and vesicular trafficking, is a selective binding protein (RACK) for protein kinase C, epsilon type. It binds to Golgi membranes in a GTP-dependent manner. The protein is Coatomer subunit beta' (COPB2) of Pongo abelii (Sumatran orangutan).